We begin with the raw amino-acid sequence, 418 residues long: Protease LasA (418 aa).

Residues 1–31 (MQHKRSRALASPRSPFLFALLALAVGGTANA) form the signal peptide. The propeptide occupies 32 to 236 (HDDGLPAFRY…ARQLQAKAAL (205 aa)). Zn(2+) is bound by residues His259 and Asp272. Cys301 and Cys347 are joined by a disulfide. Active-site proton donor/acceptor residues include His317 and His356. His358 is a Zn(2+) binding site. Cys391 and Cys406 are disulfide-bonded.

It belongs to the peptidase M23A family. Zn(2+) is required as a cofactor.

Its subcellular location is the secreted. Its function is as follows. Involved in proteolysis and elastolysis (degradation of the host protein elastin). Has staphylolytic activity (degrades pentaglycine cross-links in cell wall peptidoglycan), preferring Gly-Gly-|-X substrates where X is Ala or Gly. Enhances the elastolytic but not proteolytic activity of elastase (lasB) and elastolytic activity of other proteases. Degradation of elastin is likely to contribute to the pathogenicity of P.aeruginosa. This chain is Protease LasA (lasA), found in Pseudomonas aeruginosa (strain UCBPP-PA14).